Here is a 563-residue protein sequence, read N- to C-terminus: MKIRNSPSFHGGSGYSVFRARNLTFKKVVKKVMRDQSNNQFMIQMENMIRRIVREEIQRSLQPFLSSSCVSMERSRSETPSSRSRLKLCFINSPPSSIFTGSKIEAEDGSPLVIELVDATTNTLVSTGPFSSSRVELVPLNADFTEESWTVEGFNRNILTQREGKRPLLTGDLTVMLKNGVGVITGDIAFSDNSSWTRSRKFRLGAKLTGDGAVEARSEAFGCRDQRGESYKKHHPPCPSDEVWRLEKIAKDGVSATRLAERKILTVKDFRRLYTVNRNELHNIIGAGVSKKTWNTIVSHAMDCVLDETECYIYNANTPGVTLLFNSVYELIRVSFNGNDIQNLDQPILDQLKAEAYQNLNRITAVNDRTFVGHPQRSLQCPQDPGFVVTCSGSQHIDFQGSLDPSSSSMALCHKASSSTVHPDVLMSFDNSSTARFHIDKKFLPTFGNSFKVSELDQVHGKSQTVVTKGCIENNEEDENAFSYHHHDDMTSSWSPGTHQAVETMFLTVSETEEAGMFDVHFANVNLGSPRARWCKVKAAFKVRAAFKEVRRHTTARNPREGL.

The interval 1 to 76 (MKIRNSPSFH…SSCVSMERSR (76 aa)) is calmodulin-binding. Residues 147–263 (ESWTVEGFNR…VSATRLAERK (117 aa)) are DNA-binding.

It belongs to the plant ACBP60 protein family. As to quaternary structure, interacts with calmodulin (CaM) in the presence of calcium ions; this interaction is required for defense responses. In terms of assembly, (Microbial infection) Interacts with V.dahliae SCP41; the interaction is direct and inhibits CBP60G. As to expression, expressed in seedlings, roots, leaves, inflorescences and flowers, and, to a lower extent, in siliques. Particularly present in guard cells.

Its subcellular location is the nucleus. Functionally, transcription activator that binds DNA in a sequence-specific manner, 5'-GAAATTTTGG-3', to promote the expression of target genes. Recruited to the promoter of ICS1 and other defense-related genes (e.g. PR1, PR2 and EDS5) in response to both biotic (e.g. Pseudomonas syringae pv. maculicola ES4326, P.syringae pv. tomato DC3000, and microbe-associated molecular patterns (MAMPs) such as flg22) and abiotic stresses (e.g. UV-B, drought and abscisic acid), thus triggering rapid defense responses by stimulating salicylic acid (SA) biosynthesis. Involved in basal and systemic acquired resistance to P.syringae and Hyaloperonospora arabidopsidis. Mediates resistance to drought and sensitivity to abscisic acid (ABA), especially for ABA-mediated signaling process that regulates early seedling growth. In Arabidopsis thaliana (Mouse-ear cress), this protein is Calmodulin-binding protein 60 G.